The chain runs to 352 residues: Glycerol-1-phosphate dehydrogenase [NAD(P)+] (352 aa).

NAD(+) is bound by residues 99–103 (GKSID) and 121–124 (TVAS). Asp126 contacts substrate. Ser130 serves as a coordination point for NAD(+). Asp173 is a substrate binding site. 2 residues coordinate Zn(2+): Asp173 and His253. His257 contributes to the substrate binding site. A Zn(2+)-binding site is contributed by His269.

It belongs to the glycerol-1-phosphate dehydrogenase family. In terms of assembly, homodimer. Requires Zn(2+) as cofactor.

It localises to the cytoplasm. The catalysed reaction is sn-glycerol 1-phosphate + NAD(+) = dihydroxyacetone phosphate + NADH + H(+). It carries out the reaction sn-glycerol 1-phosphate + NADP(+) = dihydroxyacetone phosphate + NADPH + H(+). It participates in membrane lipid metabolism; glycerophospholipid metabolism. Totally inhibited by EDTA in vitro. In terms of biological role, catalyzes the NAD(P)H-dependent reduction of dihydroxyacetonephosphate (DHAP or glycerone phosphate) to glycerol 1-phosphate (G1P). The G1P thus generated is used as the glycerophosphate backbone of phospholipids in the cellular membranes of Archaea. Is also able to catalyze the reverse reaction, i.e. the NAD(+)-dependent oxidation of G1P but not of G3P. Is not active toward glycerol, dihydroxyacetone, glyceraldehyde phosphate, and glycerol-2-phosphate. The chain is Glycerol-1-phosphate dehydrogenase [NAD(P)+] (egsA) from Aeropyrum pernix (strain ATCC 700893 / DSM 11879 / JCM 9820 / NBRC 100138 / K1).